The sequence spans 310 residues: MSLKVVFMGTPDFAVPTLAEIVGGGHEVVAVYTRAPAPAGRGMALRPSPVQALAERFGLPVLTPSTLRGPEAAETFRAHGADVAVVVAYGMILPPAILDAPPLGCLNLHASILPRWRGAAPIQRAVMAGDAETGVAVMRMEPGLDTGPVAMLERVAISPEMTAGDLHDRLMPLGADLMHRALGALERGGLTFTPQPAEGVVYAHKITNEEARLDWTAPAARLHDRVRGLSPFPGAFFLADLGRGPERVKVLRARSAEGSGAPGTLLDEAGTVACGEGALRLLRVQPAGKAAMEAADFLRGRRLEPGTRLA.

Residue S111–P114 participates in (6S)-5,6,7,8-tetrahydrofolate binding.

Belongs to the Fmt family.

It carries out the reaction L-methionyl-tRNA(fMet) + (6R)-10-formyltetrahydrofolate = N-formyl-L-methionyl-tRNA(fMet) + (6S)-5,6,7,8-tetrahydrofolate + H(+). In terms of biological role, attaches a formyl group to the free amino group of methionyl-tRNA(fMet). The formyl group appears to play a dual role in the initiator identity of N-formylmethionyl-tRNA by promoting its recognition by IF2 and preventing the misappropriation of this tRNA by the elongation apparatus. The chain is Methionyl-tRNA formyltransferase from Methylobacterium sp. (strain 4-46).